Reading from the N-terminus, the 439-residue chain is tRNA-2-methylthio-N(6)-dimethylallyladenosine synthase (439 aa).

The region spanning 2-119 (KKLYLKTHGC…LPDLLDSVIQ (118 aa)) is the MTTase N-terminal domain. Residues Cys-11, Cys-48, Cys-82, Cys-156, Cys-160, and Cys-163 each contribute to the [4Fe-4S] cluster site. A Radical SAM core domain is found at 142–374 (RAEGPSAFVS…QNRINVKAAE (233 aa)). Residues 377 to 439 (QSMVGTQQRI…RPYSLWGEIC (63 aa)) form the TRAM domain.

Belongs to the methylthiotransferase family. MiaB subfamily. Monomer. Requires [4Fe-4S] cluster as cofactor.

The protein resides in the cytoplasm. It catalyses the reaction N(6)-dimethylallyladenosine(37) in tRNA + (sulfur carrier)-SH + AH2 + 2 S-adenosyl-L-methionine = 2-methylsulfanyl-N(6)-dimethylallyladenosine(37) in tRNA + (sulfur carrier)-H + 5'-deoxyadenosine + L-methionine + A + S-adenosyl-L-homocysteine + 2 H(+). Its function is as follows. Catalyzes the methylthiolation of N6-(dimethylallyl)adenosine (i(6)A), leading to the formation of 2-methylthio-N6-(dimethylallyl)adenosine (ms(2)i(6)A) at position 37 in tRNAs that read codons beginning with uridine. This chain is tRNA-2-methylthio-N(6)-dimethylallyladenosine synthase, found in Coxiella burnetii (strain Dugway 5J108-111).